A 340-amino-acid chain; its full sequence is Outer membrane protein B (340 aa).

Positions 1 to 26 (MSSKLVNSLRLTFLSFLGIVSTSLDA) are cleaved as a signal peptide.

The protein belongs to the chlamydial OMP family.

Its subcellular location is the cell outer membrane. The polypeptide is Outer membrane protein B (ompB) (Chlamydia muridarum (strain MoPn / Nigg)).